Consider the following 223-residue polypeptide: Translation initiation factor 6 (223 aa).

The protein belongs to the eIF-6 family.

Its function is as follows. Binds to the 50S ribosomal subunit and prevents its association with the 30S ribosomal subunit to form the 70S initiation complex. The chain is Translation initiation factor 6 from Saccharolobus islandicus (strain Y.N.15.51 / Yellowstone #2) (Sulfolobus islandicus).